The chain runs to 1559 residues: Arginine-glutamic acid dipeptide repeats protein (1559 aa).

Basic and acidic residues predominate over residues 1–36 (MTADKDKDKDKEKDRDRDRDRERDKRDKARESENAR). The segment at 1–89 (MTADKDKDKD…KKKSRYERTD (89 aa)) is disordered. 2 positions are modified to phosphoserine: S53 and S56. Basic residues predominate over residues 73–84 (KSRKKPPKKKSR). Positions 102 to 282 (VVYRPGDCVY…PETRRLNSTQ (181 aa)) constitute a BAH domain. T119 is subject to Phosphothreonine. Phosphoserine is present on residues S141 and S303. Positions 283–386 (GEIRVGPSHQ…KALQRLVKKP (104 aa)) constitute an ELM2 domain. One can recognise an SANT domain in the interval 390–442 (LIEKCWTEDEVKRFVKGLRQYGKNFFRIRKELLPNKETGELITFYYYWKKTPE). A disordered region spans residues 463–494 (TRTASTPVNTPSRPPSSEFLDLSSASEDDFDS). Polar residues predominate over residues 464 to 473 (RTASTPVNTP). Low complexity predominate over residues 478–487 (SSEFLDLSSA). The segment at 507–532 (RHCFTTTSKDWHHGGRENILLCTDCR) adopts a GATA-type zinc-finger fold. The disordered stretch occupies residues 541–1125 (LPPIEKPVDP…PSHASQSARF (585 aa)). K559 participates in a covalent cross-link: Glycyl lysine isopeptide (Lys-Gly) (interchain with G-Cter in SUMO2). S593, S599, and S612 each carry phosphoserine. Residues 608 to 622 (SGRNSPSAASTSSND) show a composition bias toward low complexity. Over residues 623 to 639 (SKAEAVKKSAKKVKEEA) the composition is skewed to basic and acidic residues. A Glycyl lysine isopeptide (Lys-Gly) (interchain with G-Cter in SUMO2) cross-link involves residue K636. S641, S655, S674, and S678 each carry phosphoserine. Over residues 651–672 (EKVASDTEDTDRATSKKTKTQE) the composition is skewed to basic and acidic residues. Residues 687–707 (SDSRSVNDEGSSDPKDIDQDN) show a composition bias toward basic and acidic residues. Over residues 708–735 (RSTSPSIPSPQDNESDSDSSAQQQMLQT) the composition is skewed to polar residues. A compositionally biased stretch (low complexity) spans 736 to 761 (QPPALQAPSGAASAPSTAPPGTTQLP). The segment covering 768–791 (SATTVPPQGSPATSQPPNQTQSTV) has biased composition (polar residues). Residues 805–822 (LHPPRLPSPHPPLQPMTA) are compositionally biased toward pro residues. Residues 890–900 (QLPASQSALQP) are compositionally biased toward low complexity. Residues 901-931 (QQPPREQPLPPAPLAMPHIKPPPTTPIPQLP) show a composition bias toward pro residues. The segment covering 961-971 (KPLSSLSTHHP) has biased composition (low complexity). Pro residues predominate over residues 1027–1053 (PQHPFVPGGPPPITPPSCPPTSTPPAG). Residues 1054 to 1068 (PSSSSQPPCSAAVSS) are compositionally biased toward low complexity. S1098, S1105, and S1107 each carry phosphoserine. Pro residues predominate over residues 1098-1109 (SPPPPPRSPSPE). T1111 is modified (phosphothreonine). A coiled-coil region spans residues 1148 to 1205 (GSKLAKKREEAIEKAKREAEQKAREEREREKEKEKEREREREREREAERAAQKASSSA). The residue at position 1150 (K1150) is an N6-acetyllysine. Residues 1154–1198 (KREEAIEKAKREAEQKAREEREREKEKEKEREREREREREAERAA) show a composition bias toward basic and acidic residues. The interval 1154 to 1239 (KREEAIEKAK…TTIAAVPPYI (86 aa)) is disordered. The residue at position 1252 (Y1252) is a Phosphotyrosine. Phosphoserine is present on S1259.

As to quaternary structure, interacts with HDAC1 and ATN1. Interaction with ATN1 is improved when the poly-Gln region of ATN1 is extended. In terms of tissue distribution, widely expressed.

The protein resides in the nucleus. Its subcellular location is the PML body. In terms of biological role, plays a role as a transcriptional repressor during development. May play a role in the control of cell survival. Interacts with FAT1. This Rattus norvegicus (Rat) protein is Arginine-glutamic acid dipeptide repeats protein (Rere).